A 374-amino-acid polypeptide reads, in one-letter code: Growth/differentiation factor 8 (374 aa).

The first 22 residues, 1–22 (MHFTQVLISLSVLIACGPVGYG), serve as a signal peptide directing secretion. A propeptide spanning residues 23–265 (DITAHQQPST…ISEGPKRIRR (243 aa)) is cleaved from the precursor. 2 N-linked (GlcNAc...) asparagine glycosylation sites follow: Asn-72 and Asn-274. 4 disulfides stabilise this stretch: Cys-271-Cys-281, Cys-280-Cys-339, Cys-308-Cys-371, and Cys-312-Cys-373.

Belongs to the TGF-beta family. In terms of assembly, homodimer; disulfide-linked. As to expression, predominantly expressed in muscle. At hatching, expression is strongest in the skin epithelium, and is also found in the retina and brain. From day 28, expressed in skeletal muscle. In the adult, highest expression is seen in the gastrointestinal tract, brain, muscle, heart and testis. Also expressed in the adult pharynx, kidney, spleen, liver, gill, eyes, skin, swim bladder and ovary.

The protein resides in the secreted. Its function is as follows. Acts specifically as a negative regulator of skeletal muscle growth. May down-regulate muscle-specific transcription factors such as myod and myog. The protein is Growth/differentiation factor 8 (mstnb) of Danio rerio (Zebrafish).